The sequence spans 391 residues: MEKAIRNFLSQESAGGILLLVAVVFAMLMANSPLSGLYQGFLGTDVQVRVGALDIHKPLLLWINDGLMALFFLLIGLEVKRELLEGALSSVAQASLPSFAAIGGMLVPAGIYLLFNYGDPVTQAGWAIPAATDIAFALGIMALLGNRVPVALKVFLLALAIIDDLGVIVIIALFYSSDLSTISLAIASVAILGLVGLNRKGITALTPYGILGLILWVAVLKSGVHATLAGVIIAFCIPLRAKDGSSPSEHLEHSLHPWSNFLILPVFAFANAGVALGNMSLDTLLSPVPIGIALGLILGKPIGVMLFSFIAVKLKLARLPDNVGWMQIAPVAAMCGIGFTMSMFIASLAFEQADPMYGDLARLGTLIGSFIAALVGYFWLSKVLPKKGVLL.

11 helical membrane-spanning segments follow: residues 14–34, 59–79, 95–115, 124–144, 154–174, 177–197, 213–233, 261–281, 290–310, 328–348, and 363–383; these read AGGI…NSPL, LLLW…GLEV, SLPS…YLLF, AGWA…MALL, VFLL…IALF, SDLS…LVGL, LILW…GVII, FLIL…NMSL, IGIA…FSFI, IAPV…IASL, and LGTL…LSKV.

It belongs to the NhaA Na(+)/H(+) (TC 2.A.33) antiporter family.

Its subcellular location is the cell inner membrane. It catalyses the reaction Na(+)(in) + 2 H(+)(out) = Na(+)(out) + 2 H(+)(in). Its function is as follows. Na(+)/H(+) antiporter that extrudes sodium in exchange for external protons. This is Na(+)/H(+) antiporter NhaA from Shewanella putrefaciens (strain CN-32 / ATCC BAA-453).